We begin with the raw amino-acid sequence, 229 residues long: Small ribosomal subunit protein uS3 (229 aa).

In terms of domain architecture, KH type-2 spans 39–107 (VRQYLTEKLK…TAQINIAEIR (69 aa)).

The protein belongs to the universal ribosomal protein uS3 family. In terms of assembly, part of the 30S ribosomal subunit. Forms a tight complex with proteins S10 and S14.

In terms of biological role, binds the lower part of the 30S subunit head. Binds mRNA in the 70S ribosome, positioning it for translation. The polypeptide is Small ribosomal subunit protein uS3 (Shewanella denitrificans (strain OS217 / ATCC BAA-1090 / DSM 15013)).